Here is a 266-residue protein sequence, read N- to C-terminus: uncharacterized protein (266 aa).

The 150-residue stretch at 112–261 (LEKKIFISHS…KKWERIKAKF (150 aa)) folds into the TIR domain. Glutamate 192 is a catalytic residue.

The enzyme catalyses NAD(+) + H2O = ADP-D-ribose + nicotinamide + H(+). This is an uncharacterized protein from Bacillus subtilis (strain 168).